The chain runs to 312 residues: Glyoxylate/hydroxypyruvate reductase A (312 aa).

Residue R227 is part of the active site. The active-site Proton donor is H275.

It belongs to the D-isomer specific 2-hydroxyacid dehydrogenase family. GhrA subfamily.

It is found in the cytoplasm. The enzyme catalyses glycolate + NADP(+) = glyoxylate + NADPH + H(+). It catalyses the reaction (R)-glycerate + NAD(+) = 3-hydroxypyruvate + NADH + H(+). The catalysed reaction is (R)-glycerate + NADP(+) = 3-hydroxypyruvate + NADPH + H(+). Its function is as follows. Catalyzes the NADPH-dependent reduction of glyoxylate and hydroxypyruvate into glycolate and glycerate, respectively. The sequence is that of Glyoxylate/hydroxypyruvate reductase A from Salmonella agona (strain SL483).